Consider the following 153-residue polypeptide: Superoxide dismutase [Cu-Zn] (153 aa).

Cu cation is bound by residues His45, His47, and His62. The cysteines at positions 56 and 145 are disulfide-linked. Zn(2+) contacts are provided by His62, His70, His79, and Asp82. A Cu cation-binding site is contributed by His119.

Belongs to the Cu-Zn superoxide dismutase family. In terms of assembly, homodimer. Cu cation serves as cofactor. Zn(2+) is required as a cofactor.

Its subcellular location is the cytoplasm. It carries out the reaction 2 superoxide + 2 H(+) = H2O2 + O2. Functionally, destroys radicals which are normally produced within the cells and which are toxic to biological systems. The sequence is that of Superoxide dismutase [Cu-Zn] from Drosophila erecta (Fruit fly).